Consider the following 180-residue polypeptide: Centromere protein M (180 aa).

As to quaternary structure, component of the CENPA-NAC complex, at least composed of CENPA, CENPC, CENPH, CENPM, CENPN, CENPT and CENPU. The CENPA-NAC complex interacts with the CENPA-CAD complex, composed of CENPI, CENPK, CENPL, CENPO, CENPP, CENPQ, CENPR and CENPS. In terms of tissue distribution, isoform 3 is highly expressed in spleen, and intermediately in heart, prostate and ovary. Isoform 3 is highly expressed in resting CD19 B-cells and B-lineage chronic lymphocytic leukemia (B-CLL) cells and weakly expressed in activated B-cells. Isoform 1 is selectively expressed in activated CD19 cells and weakly in resting CD19 B-cells.

It is found in the nucleus. The protein localises to the cytoplasm. It localises to the chromosome. The protein resides in the centromere. Its subcellular location is the kinetochore. Functionally, component of the CENPA-NAC (nucleosome-associated) complex, a complex that plays a central role in assembly of kinetochore proteins, mitotic progression and chromosome segregation. The CENPA-NAC complex recruits the CENPA-CAD (nucleosome distal) complex and may be involved in incorporation of newly synthesized CENPA into centromeres. The protein is Centromere protein M (CENPM) of Homo sapiens (Human).